Consider the following 262-residue polypeptide: Hydroxyacylglutathione hydrolase (262 aa).

Zn(2+)-binding residues include histidine 53, histidine 55, aspartate 57, histidine 58, histidine 111, aspartate 128, and histidine 166.

This sequence belongs to the metallo-beta-lactamase superfamily. Glyoxalase II family. Monomer. The cofactor is Zn(2+).

It catalyses the reaction an S-(2-hydroxyacyl)glutathione + H2O = a 2-hydroxy carboxylate + glutathione + H(+). Its pathway is secondary metabolite metabolism; methylglyoxal degradation; (R)-lactate from methylglyoxal: step 2/2. In terms of biological role, thiolesterase that catalyzes the hydrolysis of S-D-lactoyl-glutathione to form glutathione and D-lactic acid. In Nitrosomonas europaea (strain ATCC 19718 / CIP 103999 / KCTC 2705 / NBRC 14298), this protein is Hydroxyacylglutathione hydrolase.